The primary structure comprises 663 residues: Protein KINESIN LIGHT CHAIN-RELATED 2 (663 aa).

A compositionally biased stretch (basic and acidic residues) spans 1–14 (MDVGESNERVKDDS). Disordered stretches follow at residues 1 to 24 (MDVG…RSPL) and 86 to 146 (GESK…KVSV). Phosphoserine is present on Ser19. Residues 86-100 (GESKKEIILEKKEES) show a composition bias toward basic and acidic residues. Residues 102–111 (GEGSLSQKKP) are compositionally biased toward polar residues. TPR repeat units lie at residues 147 to 181 (DEES…ALRA), 200 to 233 (VMSL…PMIE), 243 to 276 (FAGC…QRQV), 285 to 318 (GETC…HKEN), 329 to 363 (AADR…SSQN), 369 to 402 (AAVD…FKQG), 411 to 444 (ALVY…YLKP), 454 to 487 (ATGF…YANA), 495 to 528 (AGIE…FRNS), 537 to 570 (GIAL…LEKE), and 579 to 612 (LAVY…REEK).

The protein belongs to the kinesin light chain family.

This Arabidopsis thaliana (Mouse-ear cress) protein is Protein KINESIN LIGHT CHAIN-RELATED 2.